The primary structure comprises 193 residues: dCTP deaminase, dUMP-forming (193 aa).

DCTP is bound by residues 101 to 106 (KSSLGR), D119, 127 to 129 (TLE), Q148, Y162, and Q174. E129 acts as the Proton donor/acceptor in catalysis. The segment at 160–193 (TPYGSGSLGSKYQGQRGPTPSKGYLNFSSEQDSD) is disordered. Over residues 167–177 (LGSKYQGQRGP) the composition is skewed to polar residues.

The protein belongs to the dCTP deaminase family. In terms of assembly, homotrimer.

It catalyses the reaction dCTP + 2 H2O = dUMP + NH4(+) + diphosphate. It functions in the pathway pyrimidine metabolism; dUMP biosynthesis; dUMP from dCTP: step 1/1. In terms of biological role, bifunctional enzyme that catalyzes both the deamination of dCTP to dUTP and the hydrolysis of dUTP to dUMP without releasing the toxic dUTP intermediate. This chain is dCTP deaminase, dUMP-forming, found in Corynebacterium efficiens (strain DSM 44549 / YS-314 / AJ 12310 / JCM 11189 / NBRC 100395).